The sequence spans 1318 residues: Serine/threonine-protein kinase ppk18 (1318 aa).

The tract at residues 431–485 (PSVSPEEVHDISQFNHRNDPPITAASVDSSNSFSVHRSSTNHSSTNSGSPNLSRR) is disordered. Positions 462–479 (SFSVHRSSTNHSSTNSGS) are enriched in low complexity. The 369-residue stretch at 566-934 (YEIIKPISKG…INEIKEHPFF (369 aa)) folds into the Protein kinase domain. ATP-binding positions include 572-580 (ISKGTFGTV) and Lys-595. The Proton acceptor role is filled by Asp-690. The AGC-kinase C-terminal domain occupies 935–1044 (NGINWDDIFS…KNLSVLERAN (110 aa)). Disordered stretches follow at residues 968–1022 (GAAE…FSEA), 1058–1078 (KLHI…DMPS), and 1091–1127 (SLMT…GPKS). A compositionally biased stretch (polar residues) spans 972 to 1000 (SNMSSSVNSGEEVSKDNNVSQERGSQFLR). Residues 1091–1115 (SLMTNQGSNFSSTDSTPRKSINSSD) show a composition bias toward polar residues. The span at 1116–1127 (VESRSKTDGPKS) shows a compositional bias: basic and acidic residues. The Response regulatory domain maps to 1200 to 1316 (KALICVSKLN…LLRGYIARLC (117 aa)).

The protein belongs to the protein kinase superfamily. Ser/Thr protein kinase family.

It localises to the cytoplasm. It catalyses the reaction L-seryl-[protein] + ATP = O-phospho-L-seryl-[protein] + ADP + H(+). The enzyme catalyses L-threonyl-[protein] + ATP = O-phospho-L-threonyl-[protein] + ADP + H(+). The sequence is that of Serine/threonine-protein kinase ppk18 (ppk18) from Schizosaccharomyces pombe (strain 972 / ATCC 24843) (Fission yeast).